Reading from the N-terminus, the 332-residue chain is Ketol-acid reductoisomerase (NAD(+)) (332 aa).

The region spanning 1-181 (MKIYYDQDAD…GATRAGVIQT (181 aa)) is the KARI N-terminal Rossmann domain. Residues 24 to 27 (YGSQ), serine 50, and 82 to 85 (DEKQ) each bind NAD(+). Histidine 107 is a catalytic residue. Glycine 133 contacts NAD(+). The region spanning 182-327 (TFKEETETDL…ARLRGMMPWL (146 aa)) is the KARI C-terminal knotted domain. The Mg(2+) site is built by aspartate 190, glutamate 194, glutamate 226, and glutamate 230. Residue serine 251 participates in substrate binding.

The protein belongs to the ketol-acid reductoisomerase family. Requires Mg(2+) as cofactor.

It carries out the reaction (2R)-2,3-dihydroxy-3-methylbutanoate + NAD(+) = (2S)-2-acetolactate + NADH + H(+). It participates in amino-acid biosynthesis; L-isoleucine biosynthesis; L-isoleucine from 2-oxobutanoate: step 2/4. It functions in the pathway amino-acid biosynthesis; L-valine biosynthesis; L-valine from pyruvate: step 2/4. Involved in the biosynthesis of branched-chain amino acids (BCAA). Catalyzes an alkyl-migration followed by a ketol-acid reduction of (S)-2-acetolactate (S2AL) to yield (R)-2,3-dihydroxy-isovalerate. In the isomerase reaction, S2AL is rearranged via a Mg-dependent methyl migration to produce 3-hydroxy-3-methyl-2-ketobutyrate (HMKB). In the reductase reaction, this 2-ketoacid undergoes a metal-dependent reduction by NADH to yield (R)-2,3-dihydroxy-isovalerate. The protein is Ketol-acid reductoisomerase (NAD(+)) of Thermacetogenium phaeum (strain ATCC BAA-254 / DSM 26808 / PB).